An 85-amino-acid chain; its full sequence is F1845 adhesin operon regulatory protein (85 aa).

In terms of biological role, regulates the transcription of genes involved in the biosynthesis of F1845 fimbrial adhesin. This Escherichia coli protein is F1845 adhesin operon regulatory protein (daaA).